We begin with the raw amino-acid sequence, 1086 residues long: 1,2-beta-oligoglucan phosphorylase (1086 aa).

The active-site Proton donor is D741.

This sequence belongs to the glycosyl hydrolase 94 family. As to quaternary structure, monomer.

The enzyme catalyses [(1-&gt;2)-beta-D-glucosyl](n) + phosphate = [(1-&gt;2)-beta-D-glucosyl](n-1) + alpha-D-glucose 1-phosphate. Its function is as follows. Catalyzes the reversible phosphorolysis of beta-(1-&gt;2)-D-glucans. The minimum length of the substrate for the phosphorolytic reaction is 3 D-glucose units. In Listeria innocua serovar 6a (strain ATCC BAA-680 / CLIP 11262), this protein is 1,2-beta-oligoglucan phosphorylase.